We begin with the raw amino-acid sequence, 433 residues long: Dihydrolipoyllysine-residue acetyltransferase component of pyruvate dehydrogenase complex (433 aa).

The Lipoyl-binding domain occupies 2-77 (AFEFRLPDIG…VVGDVIVKID (76 aa)). Lys43 carries the N6-lipoyllysine modification. 2 disordered regions span residues 80–134 (DAEE…PSVR) and 164–204 (YLNG…FPET). Composition is skewed to basic and acidic residues over residues 84–103 (MQFKGHGDDEDSKKEEKEQE) and 117–126 (EKTEVDESKT). One can recognise a Peripheral subunit-binding (PSBD) domain in the interval 128–165 (KAMPSVRKYARENGVNIKAVNGSGKNGRITKEDIDAYL). Over residues 166-188 (NGGSSEEGSNTSVASESTSSDVV) the composition is skewed to low complexity. His404 is an active-site residue.

This sequence belongs to the 2-oxoacid dehydrogenase family. Forms a 24-polypeptide structural core with octahedral symmetry. (R)-lipoate serves as cofactor.

The catalysed reaction is N(6)-[(R)-dihydrolipoyl]-L-lysyl-[protein] + acetyl-CoA = N(6)-[(R)-S(8)-acetyldihydrolipoyl]-L-lysyl-[protein] + CoA. The pyruvate dehydrogenase complex catalyzes the overall conversion of pyruvate to acetyl-CoA and CO(2). It contains multiple copies of three enzymatic components: pyruvate dehydrogenase (E1), dihydrolipoamide acetyltransferase (E2) and lipoamide dehydrogenase (E3). In Staphylococcus epidermidis (strain ATCC 12228 / FDA PCI 1200), this protein is Dihydrolipoyllysine-residue acetyltransferase component of pyruvate dehydrogenase complex (pdhC).